A 282-amino-acid chain; its full sequence is Structure-specific endonuclease subunit slx1 (282 aa).

The 91-residue stretch at 7–97 (GFYGVYLLFC…RLTHVPRKTK (91 aa)) folds into the GIY-YIG domain. The SLX1-type zinc-finger motif lies at 191-243 (CRVCYERVQDKDDSLHCFHPGCTLTAHIMCLAKLFLLNEPQNLIPVEGLCPSC).

Belongs to the SLX1 family. In terms of assembly, forms a heterodimer with slx4. The cofactor is a divalent metal cation.

Its subcellular location is the nucleus. Functionally, catalytic subunit of the slx1-slx4 structure-specific endonuclease that resolves DNA secondary structures generated during DNA repair and recombination. Has endonuclease activity towards branched DNA substrates, introducing single-strand cuts in duplex DNA close to junctions with ss-DNA. This Xenopus laevis (African clawed frog) protein is Structure-specific endonuclease subunit slx1 (slx1a).